Here is a 400-residue protein sequence, read N- to C-terminus: MTDFRTLDDAGPLQGKRVLLRVDLNVPMEGGRVTDATRIERVVPTIREIAEAGGRVILLAHFGRPKGKPEPKDSLKPILPTLSEKLGRPVAFGEDCVGEAAAKAVAALKDGDVLLLENTRYHAGEEKNAPEFAQALAANGDLYVNEAFSAAHRAHASTEGLARLLPAYAGRLMQAELDALTKGLEAPARPVIAIVGGAKVSTKIDLLENLVAKVDMLVIGGGMANTFLHAQGKDVGKSLCEKDLAETAQRILAAAKEKNCTIILPADALVAREFKANAENETVTVDAVPSDAMILDVGASSIATIDGAIDEARTLVWNGPLGAFELTPFDTGTVAVAQHAARRTRAGQLVSVAGGGDTVAALNHAGVGEDFSYVSTAGGAFLEWLEGKELPGVEALRAKA.

Substrate-binding positions include 23 to 25 (DLN), R38, 61 to 64 (HFGR), R120, and R153. ATP-binding positions include K203, E325, and 355–358 (GGDT).

This sequence belongs to the phosphoglycerate kinase family. Monomer.

The protein localises to the cytoplasm. It carries out the reaction (2R)-3-phosphoglycerate + ATP = (2R)-3-phospho-glyceroyl phosphate + ADP. The protein operates within carbohydrate degradation; glycolysis; pyruvate from D-glyceraldehyde 3-phosphate: step 2/5. The sequence is that of Phosphoglycerate kinase from Methylorubrum populi (strain ATCC BAA-705 / NCIMB 13946 / BJ001) (Methylobacterium populi).